The primary structure comprises 98 residues: DNA-binding protein Fis (98 aa).

Residues 74–93 (QTKAANMMGINRGTLRKKLK) constitute a DNA-binding region (H-T-H motif).

This sequence belongs to the transcriptional regulatory Fis family. In terms of assembly, homodimer.

Its function is as follows. Activates ribosomal RNA transcription. Plays a direct role in upstream activation of rRNA promoters. This Aliivibrio fischeri (strain ATCC 700601 / ES114) (Vibrio fischeri) protein is DNA-binding protein Fis.